A 527-amino-acid polypeptide reads, in one-letter code: Tubulin-specific chaperone E (527 aa).

Serine 2 is modified (N-acetylserine). The 45-residue stretch at 27 to 71 (GVVPPVAGPWLGVEWDNPERGKHDGSHEGTVYFKCRHPTGGSFIR) folds into the CAP-Gly domain. LRR repeat units lie at residues 154-175 (NIRKVDLSKNLLSSWDEVIHIA), 180-200 (HLEVLNVSENKLKFPSGSVLT), 205-226 (VLKVLVLNQTGITWAEVLRCVA), 230-252 (GLEELYLESNNIFISERPTDVLQ), 253-274 (TVKLLDLSSNQLIDENQLYLIA), 278-299 (RLEQLILSDTGISSLHFPDAGI), and 308-329 (SLKYLVVNDNQISQWSFFNELE). The region spanning 342–384 (NPLTKEDKEAETARLLIIASIGQLKTLNKCEILPEERRRAELD) is the LRRCT domain. Lysine 463 is modified (N6-acetyllysine). A Phosphoserine modification is found at serine 495.

Belongs to the TBCE family. Supercomplex made of cofactors A to E. Cofactors A and D function by capturing and stabilizing tubulin in a quasi-native conformation. Cofactor E binds to the cofactor D-tubulin complex; interaction with cofactor C then causes the release of tubulin polypeptides that are committed to the native state. Cofactors B and E can form a heterodimer which binds to alpha-tubulin and enhances their ability to dissociate tubulin heterodimers. Interacts with TBCD.

It localises to the cytoplasm. Its subcellular location is the cytoskeleton. Tubulin-folding protein; involved in the second step of the tubulin folding pathway and in the regulation of tubulin heterodimer dissociation. Required for correct organization of microtubule cytoskeleton and mitotic splindle, and maintenance of the neuronal microtubule network. The chain is Tubulin-specific chaperone E (TBCE) from Homo sapiens (Human).